We begin with the raw amino-acid sequence, 324 residues long: Beta-ketoacyl-[acyl-carrier-protein] synthase III (324 aa).

Catalysis depends on residues cysteine 114 and histidine 246. Residues 247–251 (QANLR) form an ACP-binding region. The active site involves asparagine 276.

This sequence belongs to the thiolase-like superfamily. FabH family. Homodimer.

The protein localises to the cytoplasm. It carries out the reaction malonyl-[ACP] + acetyl-CoA + H(+) = 3-oxobutanoyl-[ACP] + CO2 + CoA. It functions in the pathway lipid metabolism; fatty acid biosynthesis. Its function is as follows. Catalyzes the condensation reaction of fatty acid synthesis by the addition to an acyl acceptor of two carbons from malonyl-ACP. Catalyzes the first condensation reaction which initiates fatty acid synthesis and may therefore play a role in governing the total rate of fatty acid production. Possesses both acetoacetyl-ACP synthase and acetyl transacylase activities. Its substrate specificity determines the biosynthesis of branched-chain and/or straight-chain of fatty acids. The protein is Beta-ketoacyl-[acyl-carrier-protein] synthase III of Campylobacter jejuni subsp. doylei (strain ATCC BAA-1458 / RM4099 / 269.97).